Consider the following 809-residue polypeptide: Lon protease (809 aa).

Residues 8–203 (LPVVALRNMA…RLCLILADEI (196 aa)) enclose the Lon N-terminal domain. Position 354–361 (354–361 (GPPGTGKT)) interacts with ATP. The region spanning 629 to 809 (KDEVGIVCGL…MDEVLKHALV (181 aa)) is the Lon proteolytic domain. Residues serine 716 and lysine 759 contribute to the active site.

Belongs to the peptidase S16 family. As to quaternary structure, homohexamer. Organized in a ring with a central cavity.

It is found in the cytoplasm. It carries out the reaction Hydrolysis of proteins in presence of ATP.. In terms of biological role, ATP-dependent serine protease that mediates the selective degradation of mutant and abnormal proteins as well as certain short-lived regulatory proteins. Required for cellular homeostasis and for survival from DNA damage and developmental changes induced by stress. Degrades polypeptides processively to yield small peptide fragments that are 5 to 10 amino acids long. Binds to DNA in a double-stranded, site-specific manner. The chain is Lon protease from Lachnoclostridium phytofermentans (strain ATCC 700394 / DSM 18823 / ISDg) (Clostridium phytofermentans).